The sequence spans 271 residues: Putative pyruvate, phosphate dikinase regulatory protein 1 (271 aa).

An ADP-binding site is contributed by 156 to 163 (GVSRTSKT).

The protein belongs to the pyruvate, phosphate/water dikinase regulatory protein family. PDRP subfamily.

It catalyses the reaction N(tele)-phospho-L-histidyl/L-threonyl-[pyruvate, phosphate dikinase] + ADP = N(tele)-phospho-L-histidyl/O-phospho-L-threonyl-[pyruvate, phosphate dikinase] + AMP + H(+). It carries out the reaction N(tele)-phospho-L-histidyl/O-phospho-L-threonyl-[pyruvate, phosphate dikinase] + phosphate + H(+) = N(tele)-phospho-L-histidyl/L-threonyl-[pyruvate, phosphate dikinase] + diphosphate. Bifunctional serine/threonine kinase and phosphorylase involved in the regulation of the pyruvate, phosphate dikinase (PPDK) by catalyzing its phosphorylation/dephosphorylation. In Staphylococcus saprophyticus subsp. saprophyticus (strain ATCC 15305 / DSM 20229 / NCIMB 8711 / NCTC 7292 / S-41), this protein is Putative pyruvate, phosphate dikinase regulatory protein 1.